Reading from the N-terminus, the 441-residue chain is Putative T-box protein 32 (441 aa).

Residues 18-199 (NVIGSSRTSD…TGPSAKKTPE (182 aa)) constitute a DNA-binding region (T-box). Residues 268-289 (SLSSPAALQQDSTVSSDNDFDD) form a disordered region. Over residues 273 to 284 (AALQQDSTVSSD) the composition is skewed to polar residues.

Its subcellular location is the nucleus. This Caenorhabditis elegans protein is Putative T-box protein 32 (tbx-32).